Consider the following 236-residue polypeptide: uncharacterized protein (236 aa).

The region spanning 3 to 208 (ILGLTGSIAT…PSYFFTLLCL (206 aa)) is the DPCK domain. 8–15 (GSIATGKS) is a binding site for ATP. A phosphoserine mark is found at serine 82 and serine 86.

This sequence belongs to the CoaE family.

The protein localises to the cytoplasm. This is an uncharacterized protein from Schizosaccharomyces pombe (strain 972 / ATCC 24843) (Fission yeast).